We begin with the raw amino-acid sequence, 577 residues long: Probable ATP-dependent RNA helicase DDX55 homolog (577 aa).

The short motif at 7–37 is the Q motif element; sequence AVATKTYREKLGPEILEVFDKSYKSFTDVQV. The Helicase ATP-binding domain occupies 40–218; it reads GTHLLNLSDV…VFGLRNAKQV (179 aa). 53–60 provides a ligand contact to ATP; that stretch reads SPTGSGKT. A DEAD box motif is present at residues 166–169; that stretch reads DEAD. Residues 231 to 393 form the Helicase C-terminal domain; sequence TLKNYFVECP…EVKVPTSTSR (163 aa). Positions 508-577 are disordered; the sequence is AKEKKRREKE…LSKKEIKDVL (70 aa). Residues 510–530 show a composition bias toward basic residues; sequence EKKRREKEARKMKRAGGRFKS.

The protein belongs to the DEAD box helicase family. DDX55/SPB4 subfamily.

The enzyme catalyses ATP + H2O = ADP + phosphate + H(+). Probable ATP-binding RNA helicase. This chain is Probable ATP-dependent RNA helicase DDX55 homolog, found in Caenorhabditis briggsae.